Here is a 91-residue protein sequence, read N- to C-terminus: Large ribosomal subunit protein bL28 (91 aa).

The interval 1–23 (MSRVCELTGKGPMSGNNVSHANN) is disordered.

It belongs to the bacterial ribosomal protein bL28 family.

In Paracoccus denitrificans (strain Pd 1222), this protein is Large ribosomal subunit protein bL28.